The sequence spans 498 residues: 3-octaprenyl-4-hydroxybenzoate carboxy-lyase (498 aa).

Mn(2+) is bound at residue Asn-175. Residues 178–180 (IYR), 192–194 (RWL), and 197–198 (RG) contribute to the prenylated FMN site. Glu-241 is a binding site for Mn(2+). Asp-290 functions as the Proton donor in the catalytic mechanism.

It belongs to the UbiD family. In terms of assembly, homohexamer. The cofactor is prenylated FMN. Mn(2+) is required as a cofactor.

It localises to the cell membrane. It carries out the reaction a 4-hydroxy-3-(all-trans-polyprenyl)benzoate + H(+) = a 2-(all-trans-polyprenyl)phenol + CO2. The protein operates within cofactor biosynthesis; ubiquinone biosynthesis. Functionally, catalyzes the decarboxylation of 3-octaprenyl-4-hydroxy benzoate to 2-octaprenylphenol, an intermediate step in ubiquinone biosynthesis. This is 3-octaprenyl-4-hydroxybenzoate carboxy-lyase from Pectobacterium atrosepticum (strain SCRI 1043 / ATCC BAA-672) (Erwinia carotovora subsp. atroseptica).